Here is a 348-residue protein sequence, read N- to C-terminus: Protein RecA (348 aa).

Residue 67–74 (GPESSGKT) coordinates ATP.

The protein belongs to the RecA family.

The protein localises to the cytoplasm. In terms of biological role, can catalyze the hydrolysis of ATP in the presence of single-stranded DNA, the ATP-dependent uptake of single-stranded DNA by duplex DNA, and the ATP-dependent hybridization of homologous single-stranded DNAs. It interacts with LexA causing its activation and leading to its autocatalytic cleavage. The chain is Protein RecA from Clostridioides difficile (strain 630) (Peptoclostridium difficile).